Reading from the N-terminus, the 882-residue chain is DNA mismatch repair protein MutS (882 aa).

629–636 is a binding site for ATP; the sequence is GPNMGGKS.

Belongs to the DNA mismatch repair MutS family.

In terms of biological role, this protein is involved in the repair of mismatches in DNA. It is possible that it carries out the mismatch recognition step. This protein has a weak ATPase activity. In Ralstonia pickettii (strain 12J), this protein is DNA mismatch repair protein MutS.